The sequence spans 60 residues: Andropin (60 aa).

The N-terminal stretch at Met-1–Ala-23 is a signal peptide.

It belongs to the andropin family. Ejaculatory duct of adult males.

The protein resides in the secreted. Functionally, male-specific peptide with moderate activity against Gram-positive bacteria. This chain is Andropin (Anp), found in Drosophila simulans (Fruit fly).